Consider the following 132-residue polypeptide: MVMTDPIADMLTRIRNANMVKHEKLELPASNIKKEIADILKREGFVKDYELIEDNKQGVLRIFLKYSANEDKVISGIKRISKPGLRVYAKADEVPRVLNGLGIAIVSTSNGLLSDKEARSQAVGGEVLAYVW.

Belongs to the universal ribosomal protein uS8 family. In terms of assembly, part of the 30S ribosomal subunit. Contacts proteins S5 and S12.

Its function is as follows. One of the primary rRNA binding proteins, it binds directly to 16S rRNA central domain where it helps coordinate assembly of the platform of the 30S subunit. The polypeptide is Small ribosomal subunit protein uS8 (Oceanobacillus iheyensis (strain DSM 14371 / CIP 107618 / JCM 11309 / KCTC 3954 / HTE831)).